The following is a 167-amino-acid chain: CKLF-like MARVEL transmembrane domain-containing protein 7 (167 aa).

In terms of domain architecture, MARVEL spans 32-158 (YPLTHGALFK…SLWLSYKITC (127 aa)). The next 4 membrane-spanning stretches (helical) occupy residues 35-55 (THGA…FICV), 69-89 (FEVV…VHLF), 102-122 (LSEL…SIVI), and 132-152 (LVAG…SLWL).

This sequence belongs to the chemokine-like factor family.

It is found in the membrane. This is CKLF-like MARVEL transmembrane domain-containing protein 7 (Cmtm7) from Mus musculus (Mouse).